Here is a 481-residue protein sequence, read N- to C-terminus: Pentatricopeptide repeat-containing protein 8, mitochondrial (481 aa).

A mitochondrion-targeting transit peptide spans 1–55; that stretch reads MQGFGSQIFRKLLRSSNAKVSDALLQNTRTLFTAPPLHSGLQTSFTAETQQHVRQ. 2 PPR repeats span residues 137-172 and 365-399; these read SARFWRIMLQSYIDLNLFDKASLIADMSLSHMEFLP and SISTANTLFSIASRLKDVKWLSAGFDMIDKYGLKP.

It is found in the mitochondrion. Functionally, mitochondrial RNA-binding protein involved in mitochondrial translation. The cox1 mRNA is one target but it is not clear if ppr8 has a single or multiple targets. The sequence is that of Pentatricopeptide repeat-containing protein 8, mitochondrial (ppr8) from Schizosaccharomyces pombe (strain 972 / ATCC 24843) (Fission yeast).